We begin with the raw amino-acid sequence, 105 residues long: Translation initiation factor 1A (105 aa).

One can recognise an S1-like domain in the interval 18–92 (IRVKLPNKRI…DKCDIIYRYT (75 aa)).

It belongs to the eIF-1A family.

In terms of biological role, seems to be required for maximal rate of protein biosynthesis. Enhances ribosome dissociation into subunits and stabilizes the binding of the initiator Met-tRNA(I) to 40 S ribosomal subunits. The polypeptide is Translation initiation factor 1A (eIF1A) (Methanocorpusculum labreanum (strain ATCC 43576 / DSM 4855 / Z)).